A 564-amino-acid polypeptide reads, in one-letter code: Membrane protein insertase YidC (564 aa).

The helical transmembrane segment at 7–24 (VLWVVFSFSLLMLWDNYN) threads the bilayer. A compositionally biased stretch (low complexity) spans 43-60 (KPAAATDDGKTAAAPTAD). A disordered region spans residues 43–76 (KPAAATDDGKTAAAPTADVPTSSAHAANATGVPD). 6 helical membrane-spanning segments follow: residues 293–313 (LATN…APGA), 341–361 (VKDY…MIQI), 364–384 (LLGN…LAFF), 438–458 (MPIV…LASV), 483–503 (IGSF…SMFI), and 524–544 (PIAF…YWVV).

This sequence belongs to the OXA1/ALB3/YidC family. Type 1 subfamily. In terms of assembly, interacts with the Sec translocase complex via SecD. Specifically interacts with transmembrane segments of nascent integral membrane proteins during membrane integration.

It localises to the cell inner membrane. In terms of biological role, required for the insertion and/or proper folding and/or complex formation of integral membrane proteins into the membrane. Involved in integration of membrane proteins that insert both dependently and independently of the Sec translocase complex, as well as at least some lipoproteins. Aids folding of multispanning membrane proteins. This is Membrane protein insertase YidC from Janthinobacterium sp. (strain Marseille) (Minibacterium massiliensis).